A 108-amino-acid polypeptide reads, in one-letter code: uncharacterized protein (108 aa).

An N-terminal signal peptide occupies residues 1-16 (MKKLILIAIMASGLVA). A lipid anchor (N-palmitoyl cysteine) is attached at C17. The S-diacylglycerol cysteine moiety is linked to residue C17.

Its subcellular location is the cell membrane. This is an uncharacterized protein from Escherichia coli (strain K12).